Reading from the N-terminus, the 210-residue chain is Large ribosomal subunit protein uL3 (210 aa).

The protein belongs to the universal ribosomal protein uL3 family. In terms of assembly, part of the 50S ribosomal subunit. Forms a cluster with proteins L14 and L19.

In terms of biological role, one of the primary rRNA binding proteins, it binds directly near the 3'-end of the 23S rRNA, where it nucleates assembly of the 50S subunit. This Caldicellulosiruptor saccharolyticus (strain ATCC 43494 / DSM 8903 / Tp8T 6331) protein is Large ribosomal subunit protein uL3.